We begin with the raw amino-acid sequence, 187 residues long: UPF0301 protein Cpar_0662 (187 aa).

This sequence belongs to the UPF0301 (AlgH) family.

The polypeptide is UPF0301 protein Cpar_0662 (Chlorobaculum parvum (strain DSM 263 / NCIMB 8327) (Chlorobium vibrioforme subsp. thiosulfatophilum)).